The chain runs to 476 residues: Glycogen synthase (476 aa).

Residue Lys15 coordinates ADP-alpha-D-glucose.

This sequence belongs to the glycosyltransferase 1 family. Bacterial/plant glycogen synthase subfamily.

The catalysed reaction is [(1-&gt;4)-alpha-D-glucosyl](n) + ADP-alpha-D-glucose = [(1-&gt;4)-alpha-D-glucosyl](n+1) + ADP + H(+). Its pathway is glycan biosynthesis; glycogen biosynthesis. Synthesizes alpha-1,4-glucan chains using ADP-glucose. This Streptococcus gordonii (strain Challis / ATCC 35105 / BCRC 15272 / CH1 / DL1 / V288) protein is Glycogen synthase.